A 443-amino-acid chain; its full sequence is Elongation factor 1-alpha (443 aa).

Residues 5–228 (KTHINLVVIG…DTMQPPKRPY (224 aa)) form the tr-type G domain. Positions 14–21 (GHVDSGKS) are G1. A GTP-binding site is contributed by 14-21 (GHVDSGKS). Residues 70–74 (GITID) form a G2 region. A G3 region spans residues 91-94 (DAPG). GTP is bound by residues 91-95 (DAPGH) and 153-156 (NKMD). The interval 153-156 (NKMD) is G4. Residues 192–194 (SGF) are G5.

Belongs to the TRAFAC class translation factor GTPase superfamily. Classic translation factor GTPase family. EF-Tu/EF-1A subfamily.

The protein localises to the cytoplasm. In terms of biological role, this protein promotes the GTP-dependent binding of aminoacyl-tRNA to the A-site of ribosomes during protein biosynthesis. The polypeptide is Elongation factor 1-alpha (MEF-1) (Plasmodium falciparum (isolate K1 / Thailand)).